We begin with the raw amino-acid sequence, 378 residues long: Putative glutamate--cysteine ligase 2 (378 aa).

The protein belongs to the glutamate--cysteine ligase type 2 family. YbdK subfamily.

It carries out the reaction L-cysteine + L-glutamate + ATP = gamma-L-glutamyl-L-cysteine + ADP + phosphate + H(+). ATP-dependent carboxylate-amine ligase which exhibits weak glutamate--cysteine ligase activity. This is Putative glutamate--cysteine ligase 2 from Ectopseudomonas mendocina (strain ymp) (Pseudomonas mendocina).